We begin with the raw amino-acid sequence, 512 residues long: cAMP-dependent protein kinase catalytic subunit (512 aa).

Residues 1–15 (MDTTAVASKGSTNVG) show a composition bias toward polar residues. 2 disordered regions span residues 1–79 (MDTT…SSLW) and 118–166 (IDNL…GLRD). Low complexity predominate over residues 16-27 (SSTDTLSTSASL). 2 stretches are compositionally biased toward polar residues: residues 32-52 (NAGS…SFNG) and 62-79 (SDAS…SSLW). The span at 143-166 (SRDGRGELGSEHGERRSAMDGLRD) shows a compositional bias: basic and acidic residues. Residues 201-456 (FNFLQTLGTG…SMDIIMHPWF (256 aa)) enclose the Protein kinase domain. Residues 207 to 215 (LGTGSFGRV) and lysine 230 each bind ATP. The active-site Proton acceptor is the aspartate 324. Threonine 356 is modified (phosphothreonine). One can recognise an AGC-kinase C-terminal domain in the interval 457–512 (RDISWDKILTRKIEVPYVPPIQAGMGDSSQFDAYADVATDYGTSEDPEFTSIFKDF).

This sequence belongs to the protein kinase superfamily. AGC Ser/Thr protein kinase family. cAMP subfamily.

It catalyses the reaction L-seryl-[protein] + ATP = O-phospho-L-seryl-[protein] + ADP + H(+). It carries out the reaction L-threonyl-[protein] + ATP = O-phospho-L-threonyl-[protein] + ADP + H(+). With respect to regulation, activated by cAMP. This is cAMP-dependent protein kinase catalytic subunit (pka1) from Schizosaccharomyces pombe (strain 972 / ATCC 24843) (Fission yeast).